The primary structure comprises 202 residues: uncharacterized protein (202 aa).

The region spanning 14 to 74 (NAKTERILDV…AMADRYFQRC (61 aa)) is the HTH tetR-type domain.

This is an uncharacterized protein from Xanthobacter autotrophicus.